The sequence spans 594 residues: Aspartate--tRNA(Asp/Asn) ligase (594 aa).

Glu-175 contributes to the L-aspartate binding site. An aspartate region spans residues 199–202 (QLFK). Residue Arg-221 participates in L-aspartate binding. ATP contacts are provided by residues 221-223 (RDE) and Gln-230. His-446 contacts L-aspartate. Glu-491 contacts ATP. Arg-498 is an L-aspartate binding site. ATP is bound at residue 543-546 (GLDR).

It belongs to the class-II aminoacyl-tRNA synthetase family. Type 1 subfamily. As to quaternary structure, homodimer.

It is found in the cytoplasm. The catalysed reaction is tRNA(Asx) + L-aspartate + ATP = L-aspartyl-tRNA(Asx) + AMP + diphosphate. Its function is as follows. Aspartyl-tRNA synthetase with relaxed tRNA specificity since it is able to aspartylate not only its cognate tRNA(Asp) but also tRNA(Asn). Reaction proceeds in two steps: L-aspartate is first activated by ATP to form Asp-AMP and then transferred to the acceptor end of tRNA(Asp/Asn). The protein is Aspartate--tRNA(Asp/Asn) ligase of Thermodesulfovibrio yellowstonii (strain ATCC 51303 / DSM 11347 / YP87).